A 138-amino-acid polypeptide reads, in one-letter code: ATP synthase epsilon chain (138 aa).

Belongs to the ATPase epsilon chain family. In terms of assembly, F-type ATPases have 2 components, CF(1) - the catalytic core - and CF(0) - the membrane proton channel. CF(1) has five subunits: alpha(3), beta(3), gamma(1), delta(1), epsilon(1). CF(0) has three main subunits: a, b and c.

It localises to the cell inner membrane. Functionally, produces ATP from ADP in the presence of a proton gradient across the membrane. In Psychrobacter cryohalolentis (strain ATCC BAA-1226 / DSM 17306 / VKM B-2378 / K5), this protein is ATP synthase epsilon chain.